Consider the following 227-residue polypeptide: Cytochrome c oxidase subunit 2 (227 aa).

The Mitochondrial intermembrane segment spans residues 1–14 (MAYPFQLGLQDATS). A helical transmembrane segment spans residues 15–45 (PIMEELMNFHDHTLMIVFLISSLVLYIISLM). The Mitochondrial matrix segment spans residues 46–59 (LTTKLTHTSTMDAQ). A helical membrane pass occupies residues 60–87 (EVETIWTILPAVILILIALPSLRILYMM). Residues 88-227 (DEINNPVLTV…NFENWSASMI (140 aa)) lie on the Mitochondrial intermembrane side of the membrane. Cu cation-binding residues include His-161, Cys-196, Glu-198, Cys-200, His-204, and Met-207. Glu-198 provides a ligand contact to Mg(2+).

It belongs to the cytochrome c oxidase subunit 2 family. As to quaternary structure, component of the cytochrome c oxidase (complex IV, CIV), a multisubunit enzyme composed of 14 subunits. The complex is composed of a catalytic core of 3 subunits MT-CO1, MT-CO2 and MT-CO3, encoded in the mitochondrial DNA, and 11 supernumerary subunits COX4I, COX5A, COX5B, COX6A, COX6B, COX6C, COX7A, COX7B, COX7C, COX8 and NDUFA4, which are encoded in the nuclear genome. The complex exists as a monomer or a dimer and forms supercomplexes (SCs) in the inner mitochondrial membrane with NADH-ubiquinone oxidoreductase (complex I, CI) and ubiquinol-cytochrome c oxidoreductase (cytochrome b-c1 complex, complex III, CIII), resulting in different assemblies (supercomplex SCI(1)III(2)IV(1) and megacomplex MCI(2)III(2)IV(2)). Found in a complex with TMEM177, COA6, COX18, COX20, SCO1 and SCO2. Interacts with TMEM177 in a COX20-dependent manner. Interacts with COX20. Interacts with COX16. Requires Cu cation as cofactor.

The protein localises to the mitochondrion inner membrane. The enzyme catalyses 4 Fe(II)-[cytochrome c] + O2 + 8 H(+)(in) = 4 Fe(III)-[cytochrome c] + 2 H2O + 4 H(+)(out). Its function is as follows. Component of the cytochrome c oxidase, the last enzyme in the mitochondrial electron transport chain which drives oxidative phosphorylation. The respiratory chain contains 3 multisubunit complexes succinate dehydrogenase (complex II, CII), ubiquinol-cytochrome c oxidoreductase (cytochrome b-c1 complex, complex III, CIII) and cytochrome c oxidase (complex IV, CIV), that cooperate to transfer electrons derived from NADH and succinate to molecular oxygen, creating an electrochemical gradient over the inner membrane that drives transmembrane transport and the ATP synthase. Cytochrome c oxidase is the component of the respiratory chain that catalyzes the reduction of oxygen to water. Electrons originating from reduced cytochrome c in the intermembrane space (IMS) are transferred via the dinuclear copper A center (CU(A)) of subunit 2 and heme A of subunit 1 to the active site in subunit 1, a binuclear center (BNC) formed by heme A3 and copper B (CU(B)). The BNC reduces molecular oxygen to 2 water molecules using 4 electrons from cytochrome c in the IMS and 4 protons from the mitochondrial matrix. This Maxomys bartelsii (Bartels's Javan maxomys) protein is Cytochrome c oxidase subunit 2 (MT-CO2).